The sequence spans 78 residues: Acyl carrier protein (78 aa).

Residues 2–77 (SEIAQKVKSI…QAIAYLEQHV (76 aa)) enclose the Carrier domain. S37 carries the post-translational modification O-(pantetheine 4'-phosphoryl)serine.

The protein belongs to the acyl carrier protein (ACP) family. 4'-phosphopantetheine is transferred from CoA to a specific serine of apo-ACP by AcpS. This modification is essential for activity because fatty acids are bound in thioester linkage to the sulfhydryl of the prosthetic group.

Its subcellular location is the cytoplasm. The protein operates within lipid metabolism; fatty acid biosynthesis. Carrier of the growing fatty acid chain in fatty acid biosynthesis. In Cytophaga hutchinsonii (strain ATCC 33406 / DSM 1761 / CIP 103989 / NBRC 15051 / NCIMB 9469 / D465), this protein is Acyl carrier protein.